An 87-amino-acid polypeptide reads, in one-letter code: Small ribosomal subunit protein uS12m (87 aa).

The protein belongs to the universal ribosomal protein uS12 family.

Its subcellular location is the mitochondrion matrix. The protein resides in the kinetoplast. In terms of biological role, protein S12 is involved in the translation initiation step. This Trypanoplasma borreli protein is Small ribosomal subunit protein uS12m (RPS12).